A 1082-amino-acid polypeptide reads, in one-letter code: Neisserial autotransporter lipoprotein NalP (1082 aa).

Positions 1–27 (MRTTPTFPTKTFKPTAMALAVATTLSA) are cleaved as a signal peptide. The N-palmitoyl cysteine moiety is linked to residue Cys-28. Residue Cys-28 is the site of S-diacylglycerol cysteine attachment. The Peptidase S8 domain occupies 110–482 (NDAYKNLINL…WGLLDAGKAM (373 aa)). Residues Asp-138, His-210, and Ser-426 each act as charge relay system in the active site. An Autotransporter domain is found at 808-1082 (DGLDHNGTGL…SGRVGVGYRF (275 aa)).

It belongs to the peptidase S8 family. In terms of processing, probably auto-processes to yield a 68-70 kDa form and a C-terminal 30 kDa translocator domain; upon overexpression in situ and in E.coli full-length protein is seen as well as (probably) auto-processed forms of 68-70 kDa and 30 kDa in size, suggesting this may have protease activity.

It is found in the cell outer membrane. Its subcellular location is the cell surface. The protein resides in the secreted. It localises to the host cytoplasm. The protein localises to the host perinuclear region. With respect to regulation, cleavage of host complement factor C3 is inhibited by PMSF. Its function is as follows. Major human immunogenic protein, detected in patients recovering from meningitidis. Autotransporter with a secreted protease domain involved in processing other autotransporter proteins including App, IgA, LbpB and NHBA. Probably autoprocesses to release the about 70 kDa passenger domain. Both cell surface protein (Neisserial autotransporter lipoprotein NalP) and the passenger domain cleave human (host) complement factor C3, generating a shorter alpha chain and a longer beta chain than normal. Uptake of a passenger domain fragment (residues 101-784) by human cells increases cell metabolic activity; the serine protease activity is required for this increase. Cleaves human (host) complement factor C3, generating a shorter alpha chain and a longer beta chain than normal. Does not act on mouse or rabbit C3. Cleavage causes C3b degradation by human CFI and CFH, and thus decreases deposition of C3b on the bacteria surface and probably facilitates complement escape. In terms of biological role, plays a role in extracellular-DNA (eDNA) mediated biofilm formation. In some strains (including cc32 strain MC58) eDNA stimulates biofilm formation. When NalP is not expressed (and no longer processes NHBA or IgA) biofilm formation increases. The sequence is that of Neisserial autotransporter lipoprotein NalP from Neisseria meningitidis serogroup B (strain ATCC BAA-335 / MC58).